Consider the following 97-residue polypeptide: MEISINYLLIVIALLFFVVAYFVGIKKQTWMLAGFNEARIRDKDRLARIAGYFFLNSGLFILLNSFISFQGQEQLIPPLILAYGAGVIIYVNKKLVE.

3 consecutive transmembrane segments (helical) span residues 5 to 25, 49 to 71, and 75 to 92; these read INYL…FVGI, IAGY…SFQG, and LIPP…IYVN.

The protein resides in the cell membrane. This is an uncharacterized protein from Bacillus subtilis (strain 168).